The primary structure comprises 81 residues: Photosystem I iron-sulfur center (81 aa).

2 consecutive 4Fe-4S ferredoxin-type domains span residues 1–31 (MAHS…MVPW) and 39–68 (IASA…VRVY). Positions 11, 14, 17, 21, 48, 51, 54, and 58 each coordinate [4Fe-4S] cluster.

As to quaternary structure, the eukaryotic PSI reaction center is composed of at least 11 subunits. It depends on [4Fe-4S] cluster as a cofactor.

The protein localises to the plastid. It is found in the chloroplast thylakoid membrane. The catalysed reaction is reduced [plastocyanin] + hnu + oxidized [2Fe-2S]-[ferredoxin] = oxidized [plastocyanin] + reduced [2Fe-2S]-[ferredoxin]. In terms of biological role, apoprotein for the two 4Fe-4S centers FA and FB of photosystem I (PSI); essential for photochemical activity. FB is the terminal electron acceptor of PSI, donating electrons to ferredoxin. The C-terminus interacts with PsaA/B/D and helps assemble the protein into the PSI complex. Required for binding of PsaD and PsaE to PSI. PSI is a plastocyanin-ferredoxin oxidoreductase, converting photonic excitation into a charge separation, which transfers an electron from the donor P700 chlorophyll pair to the spectroscopically characterized acceptors A0, A1, FX, FA and FB in turn. In Welwitschia mirabilis (Tree tumbo), this protein is Photosystem I iron-sulfur center.